The following is a 264-amino-acid chain: Small ribosomal subunit protein uS2 (264 aa).

Residues 233–264 (AQTQAGGKAEQEAPATEEAADAQTEEAATPAE) form a disordered region.

The protein belongs to the universal ribosomal protein uS2 family.

The polypeptide is Small ribosomal subunit protein uS2 (Psychrobacter arcticus (strain DSM 17307 / VKM B-2377 / 273-4)).